The sequence spans 309 residues: Probable 4-hydroxy-2-oxoglutarate aldolase, mitochondrial (309 aa).

Substrate is bound at residue 49–50; it reads SN. The Schiff-base intermediate with substrate role is filled by Lys-173.

Belongs to the DapA family.

The enzyme catalyses (4S)-4-hydroxy-2-oxoglutarate = glyoxylate + pyruvate. It catalyses the reaction (4R)-4-hydroxy-2-oxoglutarate = glyoxylate + pyruvate. Its activity is regulated as follows. Inhibited by divalent cations. In terms of biological role, catalyzes the final step in the metabolic pathway of hydroxyproline. Involved in osmoadaptation. The sequence is that of Probable 4-hydroxy-2-oxoglutarate aldolase, mitochondrial from Emericella nidulans (strain FGSC A4 / ATCC 38163 / CBS 112.46 / NRRL 194 / M139) (Aspergillus nidulans).